Here is a 258-residue protein sequence, read N- to C-terminus: Acyl-[acyl-carrier-protein]--UDP-N-acetylglucosamine O-acyltransferase (258 aa).

Belongs to the transferase hexapeptide repeat family. LpxA subfamily. As to quaternary structure, homotrimer.

It is found in the cytoplasm. The enzyme catalyses a (3R)-hydroxyacyl-[ACP] + UDP-N-acetyl-alpha-D-glucosamine = a UDP-3-O-[(3R)-3-hydroxyacyl]-N-acetyl-alpha-D-glucosamine + holo-[ACP]. The protein operates within glycolipid biosynthesis; lipid IV(A) biosynthesis; lipid IV(A) from (3R)-3-hydroxytetradecanoyl-[acyl-carrier-protein] and UDP-N-acetyl-alpha-D-glucosamine: step 1/6. Involved in the biosynthesis of lipid A, a phosphorylated glycolipid that anchors the lipopolysaccharide to the outer membrane of the cell. The chain is Acyl-[acyl-carrier-protein]--UDP-N-acetylglucosamine O-acyltransferase from Neisseria meningitidis serogroup A / serotype 4A (strain DSM 15465 / Z2491).